A 445-amino-acid polypeptide reads, in one-letter code: D-serine dehydratase (445 aa).

Lys118 carries the N6-(pyridoxal phosphate)lysine modification.

The protein belongs to the serine/threonine dehydratase family. DsdA subfamily. In terms of assembly, monomer. Requires pyridoxal 5'-phosphate as cofactor.

The enzyme catalyses D-serine = pyruvate + NH4(+). The sequence is that of D-serine dehydratase from Serratia proteamaculans (strain 568).